The primary structure comprises 141 residues: Large ribosomal subunit protein uL13 (141 aa).

It belongs to the universal ribosomal protein uL13 family. In terms of assembly, part of the 50S ribosomal subunit.

Functionally, this protein is one of the early assembly proteins of the 50S ribosomal subunit, although it is not seen to bind rRNA by itself. It is important during the early stages of 50S assembly. This is Large ribosomal subunit protein uL13 from Helicobacter pylori (strain P12).